The primary structure comprises 89 residues: Small ribosomal subunit protein uS15 (89 aa).

This sequence belongs to the universal ribosomal protein uS15 family. In terms of assembly, part of the 30S ribosomal subunit. Forms a bridge to the 50S subunit in the 70S ribosome, contacting the 23S rRNA.

In terms of biological role, one of the primary rRNA binding proteins, it binds directly to 16S rRNA where it helps nucleate assembly of the platform of the 30S subunit by binding and bridging several RNA helices of the 16S rRNA. Forms an intersubunit bridge (bridge B4) with the 23S rRNA of the 50S subunit in the ribosome. This Escherichia coli O139:H28 (strain E24377A / ETEC) protein is Small ribosomal subunit protein uS15.